The chain runs to 326 residues: Sulfate/thiosulfate import ATP-binding protein CysA (326 aa).

Residues 3-237 (IEVRNVSKNF…PSNDFVYHFL (235 aa)) enclose the ABC transporter domain. 35 to 42 (GPSGCGKT) is a binding site for ATP.

It belongs to the ABC transporter superfamily. Sulfate/tungstate importer (TC 3.A.1.6) family. In terms of assembly, the complex is composed of two ATP-binding proteins (CysA), two transmembrane proteins (CysT and CysW) and a solute-binding protein (CysP).

The protein localises to the cell inner membrane. It carries out the reaction sulfate(out) + ATP + H2O = sulfate(in) + ADP + phosphate + H(+). The catalysed reaction is thiosulfate(out) + ATP + H2O = thiosulfate(in) + ADP + phosphate + H(+). Part of the ABC transporter complex CysAWTP involved in sulfate/thiosulfate import. Responsible for energy coupling to the transport system. This Pseudomonas syringae pv. tomato (strain ATCC BAA-871 / DC3000) protein is Sulfate/thiosulfate import ATP-binding protein CysA.